Consider the following 407-residue polypeptide: Argininosuccinate synthase (407 aa).

Residue 10 to 18 (AYSGGLDTS) participates in ATP binding. L-citrulline is bound by residues Y88 and S93. ATP is bound at residue G118. L-aspartate is bound by residues T120, N124, and D125. N124 is an L-citrulline binding site. The L-citrulline site is built by R128, S177, S186, E263, and Y275.

Belongs to the argininosuccinate synthase family. Type 1 subfamily. Homotetramer.

Its subcellular location is the cytoplasm. The enzyme catalyses L-citrulline + L-aspartate + ATP = 2-(N(omega)-L-arginino)succinate + AMP + diphosphate + H(+). Its pathway is amino-acid biosynthesis; L-arginine biosynthesis; L-arginine from L-ornithine and carbamoyl phosphate: step 2/3. This chain is Argininosuccinate synthase, found in Clostridium botulinum (strain Eklund 17B / Type B).